A 240-amino-acid polypeptide reads, in one-letter code: MAQVSMRDMINAGVHFGHQTRYWNPQMKPFIFGARNGVHIINLEKTLPLFNEALAELTRIASNNGKVLFVGTKRAASEAVQAAALDCQQYYVNHRWLGGMLTNWKTVRQSIKRLKDLETQSQDGTFDKLTKKEALMRSREMEKLELSLGGIKDMGGLPDALFVIGADHEHIAVKEANNLGIPVFAIVDTNSTPAGVDFVIPGNDDATRAIQLYVSAAAAAVKEGRGNEAQVAEELAADAE.

Belongs to the universal ribosomal protein uS2 family.

This chain is Small ribosomal subunit protein uS2, found in Haemophilus influenzae (strain 86-028NP).